Reading from the N-terminus, the 144-residue chain is Large ribosomal subunit protein uL15 (144 aa).

Positions 1-25 (MFLNTIGARDGSRPEKKRVGRGIGS) are disordered.

The protein belongs to the universal ribosomal protein uL15 family. As to quaternary structure, part of the 50S ribosomal subunit.

In terms of biological role, binds to the 23S rRNA. The protein is Large ribosomal subunit protein uL15 of Methylococcus capsulatus (strain ATCC 33009 / NCIMB 11132 / Bath).